A 233-amino-acid chain; its full sequence is DnaA regulatory inactivator Hda (233 aa).

Belongs to the DnaA family. HdA subfamily. In terms of assembly, the active form seems to be an ADP-bound monomer. Forms the RIDA complex (regulatory inactivation of DnaA) of ATP-DnaA, ADP-Hda and the DNA-loaded beta sliding clamp (dnaN).

In terms of biological role, mediates the interaction of DNA replication initiator protein DnaA with DNA polymerase subunit beta sliding clamp (dnaN). Stimulates hydrolysis of ATP-DnaA to ADP-DnaA, rendering DnaA inactive for reinitiation, a process called regulatory inhibition of DnaA or RIDA. The sequence is that of DnaA regulatory inactivator Hda from Escherichia fergusonii (strain ATCC 35469 / DSM 13698 / CCUG 18766 / IAM 14443 / JCM 21226 / LMG 7866 / NBRC 102419 / NCTC 12128 / CDC 0568-73).